Reading from the N-terminus, the 197-residue chain is Protein GrpE (197 aa).

Residues 1–39 (MSSKEQKTPEGQAPEEIIMDQHEEIEAVEPEASAEQVDP) form a disordered region.

It belongs to the GrpE family. In terms of assembly, homodimer.

The protein resides in the cytoplasm. Functionally, participates actively in the response to hyperosmotic and heat shock by preventing the aggregation of stress-denatured proteins, in association with DnaK and GrpE. It is the nucleotide exchange factor for DnaK and may function as a thermosensor. Unfolded proteins bind initially to DnaJ; upon interaction with the DnaJ-bound protein, DnaK hydrolyzes its bound ATP, resulting in the formation of a stable complex. GrpE releases ADP from DnaK; ATP binding to DnaK triggers the release of the substrate protein, thus completing the reaction cycle. Several rounds of ATP-dependent interactions between DnaJ, DnaK and GrpE are required for fully efficient folding. The polypeptide is Protein GrpE (Escherichia coli O127:H6 (strain E2348/69 / EPEC)).